The chain runs to 52 residues: MAVPKKRTSISKKHIRRNFWKRKGYWAAVKAFSLAKSISTGYSKGFFVRQKK.

This sequence belongs to the bacterial ribosomal protein bL32 family.

It localises to the plastid. The protein resides in the chloroplast. The chain is Large ribosomal subunit protein bL32c from Nymphaea alba (White water-lily).